Here is a 555-residue protein sequence, read N- to C-terminus: CTP synthase (555 aa).

The segment at Met-1 to Ile-271 is amidoligase domain. Residue Ser-19 participates in CTP binding. Ser-19 lines the UTP pocket. Residues Ser-20 to Leu-25 and Asp-77 each bind ATP. 2 residues coordinate Mg(2+): Asp-77 and Glu-145. CTP contacts are provided by residues Asp-152–Glu-154, Lys-192–Gln-197, and Lys-228. Residues Lys-192–Gln-197 and Lys-228 contribute to the UTP site. The Glutamine amidotransferase type-1 domain maps to Arg-297–Ala-537. Gly-358 is an L-glutamine binding site. Cys-385 acts as the Nucleophile; for glutamine hydrolysis in catalysis. L-glutamine contacts are provided by residues Leu-386 to Gln-389, Glu-409, and Arg-466. Catalysis depends on residues His-510 and Glu-512. Residues Asp-536–Gly-555 form a disordered region.

It belongs to the CTP synthase family. In terms of assembly, homotetramer.

The enzyme catalyses UTP + L-glutamine + ATP + H2O = CTP + L-glutamate + ADP + phosphate + 2 H(+). The catalysed reaction is L-glutamine + H2O = L-glutamate + NH4(+). It catalyses the reaction UTP + NH4(+) + ATP = CTP + ADP + phosphate + 2 H(+). It participates in pyrimidine metabolism; CTP biosynthesis via de novo pathway; CTP from UDP: step 2/2. Its activity is regulated as follows. Allosterically activated by GTP, when glutamine is the substrate; GTP has no effect on the reaction when ammonia is the substrate. The allosteric effector GTP functions by stabilizing the protein conformation that binds the tetrahedral intermediate(s) formed during glutamine hydrolysis. Inhibited by the product CTP, via allosteric rather than competitive inhibition. In terms of biological role, catalyzes the ATP-dependent amination of UTP to CTP with either L-glutamine or ammonia as the source of nitrogen. Regulates intracellular CTP levels through interactions with the four ribonucleotide triphosphates. This is CTP synthase from Anaeromyxobacter dehalogenans (strain 2CP-C).